Consider the following 459-residue polypeptide: Ribulose bisphosphate carboxylase (459 aa).

Asn-111 provides a ligand contact to substrate. Residue Lys-166 is the Proton acceptor of the active site. Position 168 (Lys-168) interacts with substrate. Positions 191, 193, and 194 each coordinate Mg(2+). N6-carboxylysine is present on Lys-191. Catalysis depends on His-287, which acts as the Proton acceptor. Substrate contacts are provided by Arg-288, His-321, and Ser-368.

The protein belongs to the RuBisCO large chain family. Type II subfamily. In terms of assembly, the complex is approximately 350 kDa when isolated from either T.denitrificans or R.sphaeroides, suggesting a homohexamer or homooctamer structure. Mg(2+) serves as cofactor.

It catalyses the reaction 2 (2R)-3-phosphoglycerate + 2 H(+) = D-ribulose 1,5-bisphosphate + CO2 + H2O. The enzyme catalyses D-ribulose 1,5-bisphosphate + O2 = 2-phosphoglycolate + (2R)-3-phosphoglycerate + 2 H(+). Its function is as follows. RuBisCO catalyzes two reactions: the carboxylation of D-ribulose 1,5-bisphosphate, the primary event in carbon dioxide fixation, as well as the oxidative fragmentation of the pentose substrate. Both reactions occur simultaneously and in competition at the same active site. The chain is Ribulose bisphosphate carboxylase (cbbM) from Thiobacillus denitrificans (strain ATCC 25259 / T1).